The primary structure comprises 239 residues: Putative HTH-type transcriptional regulator YkgA (239 aa).

Positions 19-117 (QQLLEWIECN…GCSPREYRHR (99 aa)) constitute an HTH araC/xylS-type domain. 2 consecutive DNA-binding regions (H-T-H motif) follow at residues 36 to 57 (EDIA…RNFM) and 84 to 107 (MLDI…KKLF).

The polypeptide is Putative HTH-type transcriptional regulator YkgA (ykgA) (Escherichia coli (strain K12)).